Consider the following 256-residue polypeptide: Imidazole glycerol phosphate synthase subunit HisF (256 aa).

Active-site residues include D12 and D131.

This sequence belongs to the HisA/HisF family. As to quaternary structure, heterodimer of HisH and HisF.

The protein localises to the cytoplasm. It catalyses the reaction 5-[(5-phospho-1-deoxy-D-ribulos-1-ylimino)methylamino]-1-(5-phospho-beta-D-ribosyl)imidazole-4-carboxamide + L-glutamine = D-erythro-1-(imidazol-4-yl)glycerol 3-phosphate + 5-amino-1-(5-phospho-beta-D-ribosyl)imidazole-4-carboxamide + L-glutamate + H(+). It participates in amino-acid biosynthesis; L-histidine biosynthesis; L-histidine from 5-phospho-alpha-D-ribose 1-diphosphate: step 5/9. In terms of biological role, IGPS catalyzes the conversion of PRFAR and glutamine to IGP, AICAR and glutamate. The HisF subunit catalyzes the cyclization activity that produces IGP and AICAR from PRFAR using the ammonia provided by the HisH subunit. This Bifidobacterium longum (strain NCC 2705) protein is Imidazole glycerol phosphate synthase subunit HisF.